The primary structure comprises 121 residues: Ribonuclease P protein component (121 aa).

This sequence belongs to the RnpA family. In terms of assembly, consists of a catalytic RNA component (M1 or rnpB) and a protein subunit.

It carries out the reaction Endonucleolytic cleavage of RNA, removing 5'-extranucleotides from tRNA precursor.. RNaseP catalyzes the removal of the 5'-leader sequence from pre-tRNA to produce the mature 5'-terminus. It can also cleave other RNA substrates such as 4.5S RNA. The protein component plays an auxiliary but essential role in vivo by binding to the 5'-leader sequence and broadening the substrate specificity of the ribozyme. This Lactobacillus delbrueckii subsp. bulgaricus (strain ATCC 11842 / DSM 20081 / BCRC 10696 / JCM 1002 / NBRC 13953 / NCIMB 11778 / NCTC 12712 / WDCM 00102 / Lb 14) protein is Ribonuclease P protein component.